Here is a 99-residue protein sequence, read N- to C-terminus: Indole-3-acetic acid-induced protein ARG2 (99 aa).

The interval 40-62 (RGGASIGGNMVPKSGEEKVRGGE) is disordered. Residues 53–62 (SGEEKVRGGE) show a composition bias toward basic and acidic residues.

The protein is Indole-3-acetic acid-induced protein ARG2 (ARG2) of Vigna radiata var. radiata (Mung bean).